A 378-amino-acid chain; its full sequence is Rhodopsin (378 aa).

The Extracellular segment spans residues 1 to 53 (MMSIASGPSHAAYTWASQGGGFGNQTVVDKVPPEMLHMVDAHWYQFPPMNPLW). Asn-24 carries N-linked (GlcNAc...) asparagine glycosylation. A helical transmembrane segment spans residues 54–78 (HALLGFVIGVLGVISVIGNGMVIYI). At 79–90 (FTTTKSLRTPSN) the chain is on the cytoplasmic side. Residues 91 to 115 (LLVVNLAISDFLMMLCMSPAMVINC) form a helical membrane-spanning segment. Over 116 to 130 (YYETWVLGPLFCELY) the chain is Extracellular. The cysteines at positions 127 and 204 are disulfide-linked. Residues 131–150 (GLAGSLFGCASIWTMTMIAF) form a helical membrane-spanning segment. Residues 151–169 (DRYNVIVKGLSAKPMTING) are Cytoplasmic-facing. A helical transmembrane segment spans residues 170–193 (ALIRILTIWFFTLAWTIAPMFGWN). Residues 194–217 (RYVPEGNMTACGTDYLTKDLFSRS) are Extracellular-facing. Asn-200 carries N-linked (GlcNAc...) asparagine glycosylation. Residues 218–245 (YILIYSIFVYFTPLFLIIYSYFFIIQAV) form a helical membrane-spanning segment. The Cytoplasmic segment spans residues 246 to 280 (AAHEKNMREQAKKMNVASLRSAENQSTSAECKLAK). Residues 281–304 (VALMTISLWFMAWTPYLVINYSGI) traverse the membrane as a helical segment. Residues 305-311 (FETTKIS) lie on the Extracellular side of the membrane. Residues 312–336 (PLFTIWGSLFAKANAVYNPIVYGIS) form a helical membrane-spanning segment. Lys-323 bears the N6-(retinylidene)lysine mark. The Cytoplasmic portion of the chain corresponds to 337-378 (HPKYRAALFQKFPSLACTTEPTGADTMSTTTTVTEGNEKPAA).

Belongs to the G-protein coupled receptor 1 family. Opsin subfamily. Post-translationally, phosphorylated on some or all of the serine and threonine residues present in the C-terminal region.

It is found in the membrane. Functionally, visual pigments are the light-absorbing molecules that mediate vision. They consist of an apoprotein, opsin, covalently linked to cis-retinal. This is Rhodopsin from Camponotus atriceps (Florida carpenter ant).